A 586-amino-acid chain; its full sequence is 2-succinyl-5-enolpyruvyl-6-hydroxy-3-cyclohexene-1-carboxylate synthase (586 aa).

The protein belongs to the TPP enzyme family. MenD subfamily. In terms of assembly, homodimer. Requires Mg(2+) as cofactor. Mn(2+) is required as a cofactor. It depends on thiamine diphosphate as a cofactor.

The catalysed reaction is isochorismate + 2-oxoglutarate + H(+) = 5-enolpyruvoyl-6-hydroxy-2-succinyl-cyclohex-3-ene-1-carboxylate + CO2. It functions in the pathway quinol/quinone metabolism; 1,4-dihydroxy-2-naphthoate biosynthesis; 1,4-dihydroxy-2-naphthoate from chorismate: step 2/7. Its pathway is quinol/quinone metabolism; menaquinone biosynthesis. Functionally, catalyzes the thiamine diphosphate-dependent decarboxylation of 2-oxoglutarate and the subsequent addition of the resulting succinic semialdehyde-thiamine pyrophosphate anion to isochorismate to yield 2-succinyl-5-enolpyruvyl-6-hydroxy-3-cyclohexene-1-carboxylate (SEPHCHC). In Geobacillus thermodenitrificans (strain NG80-2), this protein is 2-succinyl-5-enolpyruvyl-6-hydroxy-3-cyclohexene-1-carboxylate synthase.